The primary structure comprises 47 residues: Delta-actitoxin-Ael1b (47 aa).

Intrachain disulfides connect Cys-4–Cys-44, Cys-6–Cys-34, and Cys-27–Cys-45.

Belongs to the sea anemone sodium channel inhibitory toxin family. Type I subfamily.

The protein resides in the secreted. It localises to the nematocyst. In terms of biological role, produces a positive inotropic effect in mammalian heart muscle. Modifies current passing through the fast sodium channel (Nav) in neuroblastoma cells, leading to delayed and incomplete inactivation. Paralyzes the shore crab (C.maenas) by tetanic contractions after intramuscular injection. This Anthopleura elegantissima (Green aggregating anemone) protein is Delta-actitoxin-Ael1b.